A 442-amino-acid polypeptide reads, in one-letter code: tRNA modification GTPase MnmE (442 aa).

3 residues coordinate (6S)-5-formyl-5,6,7,8-tetrahydrofolate: R24, E82, and K122. The 148-residue stretch at G219–E366 folds into the TrmE-type G domain. Residue N229 coordinates K(+). Residues N229–T234, T248–T254, and D273–G276 contribute to the GTP site. S233 contributes to the Mg(2+) binding site. Residues T248, I250, and T253 each coordinate K(+). T254 is a binding site for Mg(2+). K442 serves as a coordination point for (6S)-5-formyl-5,6,7,8-tetrahydrofolate.

This sequence belongs to the TRAFAC class TrmE-Era-EngA-EngB-Septin-like GTPase superfamily. TrmE GTPase family. As to quaternary structure, homodimer. Heterotetramer of two MnmE and two MnmG subunits. K(+) serves as cofactor.

It localises to the cytoplasm. In terms of biological role, exhibits a very high intrinsic GTPase hydrolysis rate. Involved in the addition of a carboxymethylaminomethyl (cmnm) group at the wobble position (U34) of certain tRNAs, forming tRNA-cmnm(5)s(2)U34. The protein is tRNA modification GTPase MnmE of Agrobacterium fabrum (strain C58 / ATCC 33970) (Agrobacterium tumefaciens (strain C58)).